We begin with the raw amino-acid sequence, 808 residues long: uncharacterized protein (808 aa).

In terms of domain architecture, EF-hand 1 spans Ser6 to Arg41. 7 TPR repeats span residues Phe234–Asp267, Arg269–Gly301, Pro310–His343, Phe344–Tyr377, Ala378–His411, Val412–His445, and Arg447–Val479. The 36-residue stretch at Ala600 to Gly635 folds into the EF-hand 2 domain. The stretch at Phe773 to Cys794 forms a coiled coil.

This is an uncharacterized protein from Arabidopsis thaliana (Mouse-ear cress).